Reading from the N-terminus, the 319-residue chain is tRNA U34 carboxymethyltransferase (319 aa).

Carboxy-S-adenosyl-L-methionine is bound by residues Lys-88, Trp-102, Lys-107, Gly-126, 176–177 (LE), Met-192, Tyr-196, and Arg-311.

This sequence belongs to the class I-like SAM-binding methyltransferase superfamily. CmoB family. In terms of assembly, homotetramer.

The catalysed reaction is carboxy-S-adenosyl-L-methionine + 5-hydroxyuridine(34) in tRNA = 5-carboxymethoxyuridine(34) in tRNA + S-adenosyl-L-homocysteine + H(+). Functionally, catalyzes carboxymethyl transfer from carboxy-S-adenosyl-L-methionine (Cx-SAM) to 5-hydroxyuridine (ho5U) to form 5-carboxymethoxyuridine (cmo5U) at position 34 in tRNAs. This is tRNA U34 carboxymethyltransferase from Pseudomonas syringae pv. tomato (strain ATCC BAA-871 / DC3000).